Here is a 297-residue protein sequence, read N- to C-terminus: Protoheme IX farnesyltransferase (297 aa).

The next 9 membrane-spanning stretches (helical) occupy residues 26-46 (VTQL…PGMV), 48-68 (YPVL…AFAV), 96-116 (FHII…LWNF), 120-140 (LTMW…TWLL), 147-167 (NIVI…AAVT), 174-194 (AWLL…ALAL), 218-238 (LLNI…PYIY), 243-263 (IIYL…VIAL), and 276-296 (FRFS…DHYF).

It belongs to the UbiA prenyltransferase family. Protoheme IX farnesyltransferase subfamily.

It localises to the cell membrane. It catalyses the reaction heme b + (2E,6E)-farnesyl diphosphate + H2O = Fe(II)-heme o + diphosphate. Its pathway is porphyrin-containing compound metabolism; heme O biosynthesis; heme O from protoheme: step 1/1. In terms of biological role, converts heme B (protoheme IX) to heme O by substitution of the vinyl group on carbon 2 of heme B porphyrin ring with a hydroxyethyl farnesyl side group. The polypeptide is Protoheme IX farnesyltransferase (Polynucleobacter asymbioticus (strain DSM 18221 / CIP 109841 / QLW-P1DMWA-1) (Polynucleobacter necessarius subsp. asymbioticus)).